Consider the following 387-residue polypeptide: Acyl-[acyl-carrier-protein] 6-desaturase (387 aa).

The transit peptide at Met1–Arg29 directs the protein to the chloroplast. Positions 131, 169, 172, 222, 255, and 258 each coordinate Fe cation.

The protein belongs to the fatty acid desaturase type 2 family. The cofactor is Fe(2+).

It localises to the plastid. The protein resides in the chloroplast. The catalysed reaction is hexadecanoyl-[ACP] + 2 reduced [2Fe-2S]-[ferredoxin] + O2 + 2 H(+) = (6Z)-hexadecenoyl-[ACP] + 2 oxidized [2Fe-2S]-[ferredoxin] + 2 H2O. It participates in lipid metabolism; fatty acid metabolism. Its activity is regulated as follows. Inhibited by KCN or H(2)O(2). In terms of biological role, delta(6) fatty acid desaturase introducing a cis double bond at carbon 6 of palmitoyl-[acyl-carrier protein](16:0-ACP), producing 16:1(6Z)-ACP. No activity with the coenzyme A ester of the fatty acid. The position of the double bond is determined by its distance from the carboxyl end of the fatty acid. Low activity with several saturated acyl-[acyl-carrier protein]s, including 14:0-ACP and 18:0-ACP. Requires reduced ferredoxin for detectable in vitro activity. This is Acyl-[acyl-carrier-protein] 6-desaturase from Thunbergia alata (Black-eyed Susan vine).